The chain runs to 136 residues: Ribosome-binding factor A (136 aa).

It belongs to the RbfA family. As to quaternary structure, monomer. Binds 30S ribosomal subunits, but not 50S ribosomal subunits or 70S ribosomes.

It is found in the cytoplasm. Functionally, one of several proteins that assist in the late maturation steps of the functional core of the 30S ribosomal subunit. Associates with free 30S ribosomal subunits (but not with 30S subunits that are part of 70S ribosomes or polysomes). Required for efficient processing of 16S rRNA. May interact with the 5'-terminal helix region of 16S rRNA. In Rhodopseudomonas palustris (strain BisB5), this protein is Ribosome-binding factor A.